The primary structure comprises 192 residues: MGKGCKVVICGLLSVGKTAILEQLLYGNHTIGMEDCETLEDVYMASVETDRGVKEQLHLYDTRGLQKGVELPKHYFSFADGFVLVYSVNNLESFQRVELLKKEIDKFKDKKEVAIVVLGNKLDLSEQRQVDADVAQQWARSEKVKLWEVTVTDRRTLIEPFTLLASKLSQPQSKSSFPLPGRKNKGNSNPEN.

11–18 is a GTP binding site; it reads GLLSVGKT. Positions 35–43 match the Effector region motif; sequence DCETLEDVY. The interval 58-93 is interactions with NFKBIA and NFKBIB; the sequence is HLYDTRGLQKGVELPKHYFSFADGFVLVYSVNNLES. GTP is bound by residues 61-65 and 120-123; these read DTRGL and NKLD. The segment at 168–192 is disordered; sequence LSQPQSKSSFPLPGRKNKGNSNPEN.

The protein belongs to the small GTPase superfamily. Ras family. KappaB-Ras subfamily. Interacts with both NF-kappa-B inhibitor alpha (NFKBIA) and beta (NFKBIB) in vitro. However, it probably only interacts with NFKBIB in vivo. Forms a complex with NFKBIB and NF-kappa-B heterodimer (p50/NFKB1 and p65/RELA). Also interacts with c-Rel (REL).

The protein resides in the cytoplasm. Atypical Ras-like protein that acts as a potent regulator of NF-kappa-B activity by preventing the degradation of NF-kappa-B inhibitor beta (NFKBIB) by most signals, explaining why NFKBIB is more resistant to degradation. May act by blocking phosphorylation of NFKBIB and mediating cytoplasmic retention of p65/RELA NF-kappa-B subunit. It is unclear whether it acts as a GTPase. Both GTP- and GDP-bound forms block phosphorylation of NFKBIB. The sequence is that of NF-kappa-B inhibitor-interacting Ras-like protein 1 (Nkiras1) from Mus musculus (Mouse).